Here is a 128-residue protein sequence, read N- to C-terminus: Translation initiation factor 5A (128 aa).

Lys-35 is subject to Hypusine.

Belongs to the eIF-5A family.

It localises to the cytoplasm. Functions by promoting the formation of the first peptide bond. This is Translation initiation factor 5A (eif5a) from Methanosarcina acetivorans (strain ATCC 35395 / DSM 2834 / JCM 12185 / C2A).